An 846-amino-acid polypeptide reads, in one-letter code: Auxin response factor 2A (846 aa).

Residues Met1–Ser12 show a composition bias toward polar residues. The disordered stretch occupies residues Met1–Gly30. Residues Phe146 to Met248 constitute a DNA-binding region (TF-B3). 2 disordered regions span residues Pro380–Ala423 and Asp660–Ala693. 2 stretches are compositionally biased toward polar residues: residues Ile398–Leu408 and Ser414–Ala423. The span at Ser675–Ala693 shows a compositional bias: basic and acidic residues. A PB1 domain is found at Arg720 to Glu804. Composition is skewed to polar residues over residues Asn809–Ala824 and Gln836–Ser846. Residues Asn809–Ser846 form a disordered region.

The protein belongs to the ARF family. As to quaternary structure, homodimers and heterodimers. Interacts with ASR1. Expressed in root, leaf and flower. Expressed in flower buds about three days before opening including ovary, petal and sepal with the highest in stamen. Expressed in stem. Expressed in fruit. Expressed in seeds.

The protein localises to the nucleus. In terms of biological role, auxin response factors (ARFs) are transcriptional factors that bind specifically to the DNA sequence 5'-TGTCTC-3' found in the auxin-responsive promoter elements (AuxREs). Could act as transcriptional activator or repressor. Involved in the control of fruit ripening process. Regulates expression of a number of ripening regulators, transcription factors, and ethylene biosynthesis and signaling components. May act as a transcriptional repressor of auxin-responsive genes. Regulates vegetative growth, lateral root formation and flower organ senescence, possibly partially by regulating gene expression of auxin and ethylene response factor (ERF) genes. Plays a negative role in axillary shoot meristem formation. The chain is Auxin response factor 2A from Solanum lycopersicum (Tomato).